The chain runs to 566 residues: Folate-like transporter DDB_G0272544 (566 aa).

Positions 24-81 form a coiled coil; it reads RNQDEDENENENNDNLENDNNKRNYISINNYEPYKEIDNNNNKNNNNNNIINNNNKIN. The disordered stretch occupies residues 25 to 46; the sequence is NQDEDENENENNDNLENDNNKR. Acidic residues predominate over residues 27–40; it reads DEDENENENNDNLE. The next 11 membrane-spanning stretches (helical) occupy residues 148–168, 171–191, 194–214, 226–246, 252–272, 304–324, 332–352, 364–384, 388–408, 420–440, and 458–478; these read VFLL…IIII, VAKI…WMIL, ITEG…YFSL, VNAG…LLVE, VYLL…ALGF, IWSG…QNLF, SWNG…AIIP, GIIL…MGFG, VVSA…SPIV, IGVL…LVQS, and YGAC…FLFL. A coiled-coil region spans residues 517 to 544; the sequence is YNANIIDFENNNNNNNNNNNNNNNNNNN. Low complexity predominate over residues 526–556; that stretch reads NNNNNNNNNNNNNNNNNNNNNNNNNNNNNNN. The disordered stretch occupies residues 526–566; the sequence is NNNNNNNNNNNNNNNNNNNNNNNNNNNNNNNVGIGGNDNFK.

Belongs to the reduced folate carrier (RFC) transporter (TC 2.A.48) family.

It is found in the membrane. In terms of biological role, folate transporter. The protein is Folate-like transporter DDB_G0272544 of Dictyostelium discoideum (Social amoeba).